Here is a 356-residue protein sequence, read N- to C-terminus: Fructose import permease protein FruF (356 aa).

7 helical membrane passes run 25–45 (IVAF…FLAL), 77–97 (LVIS…VAGA), 113–133 (ILIA…LVSF), 180–200 (FILG…LVGL), 231–251 (ILFL…LFAT), 268–290 (MYAI…SLAG), and 308–328 (LGVN…VICV).

This sequence belongs to the binding-protein-dependent transport system permease family. As to quaternary structure, the complex is composed of an ATP-binding protein (FruK), two transmembrane proteins (FruF and FruG) and a solute-binding protein (FruE).

It is found in the cell membrane. Functionally, part of the high-affinity ABC transporter complex FruEKFG involved in fructose uptake. Can also transport ribose and xylose, with lower affinity. Probably responsible for the translocation of the substrate across the membrane. This is Fructose import permease protein FruF from Bifidobacterium longum (strain NCC 2705).